We begin with the raw amino-acid sequence, 240 residues long: 7-cyano-7-deazaguanine synthase (240 aa).

ATP is bound at residue 14–24 (FSGGQDSATCL). 4 residues coordinate Zn(2+): Cys-202, Cys-217, Cys-220, and Cys-223.

It belongs to the QueC family. It depends on Zn(2+) as a cofactor.

The catalysed reaction is 7-carboxy-7-deazaguanine + NH4(+) + ATP = 7-cyano-7-deazaguanine + ADP + phosphate + H2O + H(+). It functions in the pathway purine metabolism; 7-cyano-7-deazaguanine biosynthesis. Catalyzes the ATP-dependent conversion of 7-carboxy-7-deazaguanine (CDG) to 7-cyano-7-deazaguanine (preQ(0)). This Rhodopseudomonas palustris (strain BisB18) protein is 7-cyano-7-deazaguanine synthase.